Here is an 87-residue protein sequence, read N- to C-terminus: Small ribosomal subunit protein bS20 (87 aa).

Over residues 1–11 the composition is skewed to basic residues; the sequence is MANIKSAKKRA. The disordered stretch occupies residues 1–27; the sequence is MANIKSAKKRAVQSEKRRQHNASQRSM.

This sequence belongs to the bacterial ribosomal protein bS20 family.

In terms of biological role, binds directly to 16S ribosomal RNA. The polypeptide is Small ribosomal subunit protein bS20 (Histophilus somni (strain 129Pt) (Haemophilus somnus)).